A 325-amino-acid chain; its full sequence is Pyruvate dehydrogenase E1 component subunit beta (325 aa).

Residue glutamate 60 coordinates thiamine diphosphate.

As to quaternary structure, heterodimer of an alpha and a beta chain. It depends on thiamine diphosphate as a cofactor.

It carries out the reaction N(6)-[(R)-lipoyl]-L-lysyl-[protein] + pyruvate + H(+) = N(6)-[(R)-S(8)-acetyldihydrolipoyl]-L-lysyl-[protein] + CO2. Its function is as follows. The pyruvate dehydrogenase complex catalyzes the overall conversion of pyruvate to acetyl-CoA and CO(2). It contains multiple copies of three enzymatic components: pyruvate dehydrogenase (E1), dihydrolipoamide acetyltransferase (E2) and lipoamide dehydrogenase (E3). This chain is Pyruvate dehydrogenase E1 component subunit beta (pdhB), found in Staphylococcus aureus (strain COL).